The sequence spans 91 residues: MAKQLSTARKFKMITGKDLFQQQKAMDTELKKEDGEITDLMEFVQYGLYLALFQDNIVKAKSDFSDFRSSFEFDTDGKGLKELVELWQKEI.

The protein belongs to the skunalikevirus chaperone protein gp12 family. As to quaternary structure, homohexamer. Further self-assembles as a spiral.

Its function is as follows. Probable chaperone for the tape measure protein. Might help to maintain the tape measure protein in solution during tail assembly. This chain is Chaperone protein gp12, found in Lactococcus phage p2 (Lactococcus lactis bacteriophage p2).